Consider the following 280-residue polypeptide: Urease accessory protein UreD (280 aa).

Belongs to the UreD family. UreD, UreF and UreG form a complex that acts as a GTP-hydrolysis-dependent molecular chaperone, activating the urease apoprotein by helping to assemble the nickel containing metallocenter of UreC. The UreE protein probably delivers the nickel.

The protein resides in the cytoplasm. In terms of biological role, required for maturation of urease via the functional incorporation of the urease nickel metallocenter. In Mesorhizobium japonicum (strain LMG 29417 / CECT 9101 / MAFF 303099) (Mesorhizobium loti (strain MAFF 303099)), this protein is Urease accessory protein UreD.